A 230-amino-acid chain; its full sequence is Ribonuclease 3 (230 aa).

Residues tyrosine 5 to aspartate 125 enclose the RNase III domain. Glutamate 40 is a binding site for Mg(2+). The active site involves aspartate 44. Mg(2+) contacts are provided by aspartate 111 and glutamate 114. The active site involves glutamate 114. The DRBM domain occupies aspartate 153–glutamine 223.

It belongs to the ribonuclease III family. As to quaternary structure, homodimer. Mg(2+) is required as a cofactor.

It localises to the cytoplasm. The enzyme catalyses Endonucleolytic cleavage to 5'-phosphomonoester.. In terms of biological role, digests double-stranded RNA. Involved in the processing of primary rRNA transcript to yield the immediate precursors to the large and small rRNAs (23S and 16S). Processes some mRNAs, and tRNAs when they are encoded in the rRNA operon. Processes pre-crRNA and tracrRNA of type II CRISPR loci if present in the organism. In Francisella tularensis subsp. tularensis (strain FSC 198), this protein is Ribonuclease 3.